The chain runs to 479 residues: Ribosomal protein uS12 methylthiotransferase RimO (479 aa).

The segment at 1–34 (MTVNTFDPSKASPVTHASDSASKTPEPNAVAAPS) is disordered. Positions 15-25 (THASDSASKTP) are enriched in polar residues. The 113-residue stretch at 39–151 (NRVGFVSLGC…VMGAVHGYIP (113 aa)) folds into the MTTase N-terminal domain. The [4Fe-4S] cluster site is built by C48, C84, C113, C184, C188, and C191. A Radical SAM core domain is found at 170 to 407 (LTPRHYAYLK…METQQAISAA (238 aa)). The TRAM domain occupies 410 to 476 (KQKVGYEMDV…DYDLTGIAVE (67 aa)).

Belongs to the methylthiotransferase family. RimO subfamily. [4Fe-4S] cluster serves as cofactor.

It localises to the cytoplasm. It carries out the reaction L-aspartate(89)-[ribosomal protein uS12]-hydrogen + (sulfur carrier)-SH + AH2 + 2 S-adenosyl-L-methionine = 3-methylsulfanyl-L-aspartate(89)-[ribosomal protein uS12]-hydrogen + (sulfur carrier)-H + 5'-deoxyadenosine + L-methionine + A + S-adenosyl-L-homocysteine + 2 H(+). Functionally, catalyzes the methylthiolation of an aspartic acid residue of ribosomal protein uS12. The polypeptide is Ribosomal protein uS12 methylthiotransferase RimO (Saccharophagus degradans (strain 2-40 / ATCC 43961 / DSM 17024)).